A 944-amino-acid polypeptide reads, in one-letter code: Leucine--tRNA ligase (944 aa).

A 'HIGH' region motif is present at residues 40-51 (PYPSGAGLHVGH). Positions 718-722 (KMSKS) match the 'KMSKS' region motif. Position 721 (lysine 721) interacts with ATP.

The protein belongs to the class-I aminoacyl-tRNA synthetase family.

It localises to the cytoplasm. It carries out the reaction tRNA(Leu) + L-leucine + ATP = L-leucyl-tRNA(Leu) + AMP + diphosphate. This is Leucine--tRNA ligase from Phocaeicola vulgatus (strain ATCC 8482 / DSM 1447 / JCM 5826 / CCUG 4940 / NBRC 14291 / NCTC 11154) (Bacteroides vulgatus).